We begin with the raw amino-acid sequence, 389 residues long: Large envelope protein (389 aa).

Composition is skewed to polar residues over residues 1–10 (MGQNLSTSNP) and 85–95 (STNRQTGRQPT). Disordered regions lie at residues 1–54 (MGQN…AFGL) and 73–106 (ILHTVPANPPPASTNRQTGRQPTPLSPPLRDTHP). Gly2 is lipidated: N-myristoyl glycine; by host. A pre-S1 region spans residues 2 to 108 (GQNLSTSNPL…PPLRDTHPQA (107 aa)). The pre-S stretch occupies residues 2-163 (GQNLSTSNPL…FSRIGDPVTN (162 aa)). Residues 2–170 (GQNLSTSNPL…VTNMENITSG (169 aa)) are Virion surface; in external conformation-facing. Topologically, residues 2–242 (GQNLSTSNPL…PGYRWMCLRG (241 aa)) are intravirion; in internal conformation. Residues 109–163 (VQWNSTTFHQTLQDPRVRGLYFPAGGSSSGTVNPVPTTASPLSSIFSRIGDPVTN) form a pre-S2 region. Residues 171–191 (FLGPLLVLQAGFFLLTRILTI) form a helical membrane-spanning segment. Residues 192 to 242 (PQSLDSWWTSLNFRGGTTVCLGQNSQSPTSNHSPTSCPPTCPGYRWMCLRG) are Intravirion; in external conformation-facing. The chain crosses the membrane as a helical span at residues 243–263 (FIIFLFILLLCLIFLLVLLEY). At 264-337 (QGMLHVCPLI…WASVRFSWLS (74 aa)) the chain is on the virion surface side. N-linked (GlcNAc...) asparagine; by host glycosylation occurs at Asn309. Residues 338–358 (LLVPFVQWFVGLSPTVWLSAI) traverse the membrane as a helical segment. The Intravirion segment spans residues 359-364 (WMMWYW). Residues 365–387 (GPSLYSILSPFLPLLPIFFCLWV) traverse the membrane as a helical segment. Over 388–389 (YI) the chain is Virion surface.

The protein belongs to the orthohepadnavirus major surface antigen family. As to quaternary structure, li-HBsAg interacts with capsid protein and with HDV Large delta antigen. Isoform M associates with host chaperone CANX through its pre-S2 N glycan. This association may be essential for M proper secretion. Post-translationally, isoform M is N-terminally acetylated by host at a ratio of 90%, and N-glycosylated by host at the pre-S2 region. Myristoylated.

It is found in the virion membrane. In terms of biological role, the large envelope protein exists in two topological conformations, one which is termed 'external' or Le-HBsAg and the other 'internal' or Li-HBsAg. In its external conformation the protein attaches the virus to cell receptors and thereby initiating infection. This interaction determines the species specificity and liver tropism. This attachment induces virion internalization predominantly through caveolin-mediated endocytosis. The large envelope protein also assures fusion between virion membrane and endosomal membrane. In its internal conformation the protein plays a role in virion morphogenesis and mediates the contact with the nucleocapsid like a matrix protein. Its function is as follows. The middle envelope protein plays an important role in the budding of the virion. It is involved in the induction of budding in a nucleocapsid independent way. In this process the majority of envelope proteins bud to form subviral lipoprotein particles of 22 nm of diameter that do not contain a nucleocapsid. In Homo sapiens (Human), this protein is Large envelope protein.